We begin with the raw amino-acid sequence, 169 residues long: Peptide deformylase (169 aa).

The Fe cation site is built by Cys-93 and His-135. Glu-136 is an active-site residue. His-139 contributes to the Fe cation binding site.

This sequence belongs to the polypeptide deformylase family. It depends on Fe(2+) as a cofactor.

It catalyses the reaction N-terminal N-formyl-L-methionyl-[peptide] + H2O = N-terminal L-methionyl-[peptide] + formate. In terms of biological role, removes the formyl group from the N-terminal Met of newly synthesized proteins. Requires at least a dipeptide for an efficient rate of reaction. N-terminal L-methionine is a prerequisite for activity but the enzyme has broad specificity at other positions. In Aquifex aeolicus (strain VF5), this protein is Peptide deformylase.